The sequence spans 275 residues: Putative pyruvate, phosphate dikinase regulatory protein (275 aa).

151 to 158 (GVSRTSKT) is a binding site for ADP.

Belongs to the pyruvate, phosphate/water dikinase regulatory protein family. PDRP subfamily.

The enzyme catalyses N(tele)-phospho-L-histidyl/L-threonyl-[pyruvate, phosphate dikinase] + ADP = N(tele)-phospho-L-histidyl/O-phospho-L-threonyl-[pyruvate, phosphate dikinase] + AMP + H(+). The catalysed reaction is N(tele)-phospho-L-histidyl/O-phospho-L-threonyl-[pyruvate, phosphate dikinase] + phosphate + H(+) = N(tele)-phospho-L-histidyl/L-threonyl-[pyruvate, phosphate dikinase] + diphosphate. In terms of biological role, bifunctional serine/threonine kinase and phosphorylase involved in the regulation of the pyruvate, phosphate dikinase (PPDK) by catalyzing its phosphorylation/dephosphorylation. In Rhodospirillum rubrum (strain ATCC 11170 / ATH 1.1.1 / DSM 467 / LMG 4362 / NCIMB 8255 / S1), this protein is Putative pyruvate, phosphate dikinase regulatory protein.